A 148-amino-acid polypeptide reads, in one-letter code: Large ribosomal subunit protein bL9 (148 aa).

The protein belongs to the bacterial ribosomal protein bL9 family.

In terms of biological role, binds to the 23S rRNA. This chain is Large ribosomal subunit protein bL9, found in Staphylococcus haemolyticus (strain JCSC1435).